The sequence spans 500 residues: Cytochrome P450 monooxygenase 103 (500 aa).

The next 2 membrane-spanning stretches (helical) occupy residues 1–21 (MAST…YLLR) and 26–46 (PLYA…IGAL). N-linked (GlcNAc...) asparagine glycosylation is present at asparagine 374. Position 441 (cysteine 441) interacts with heme.

It belongs to the cytochrome P450 family. Heme is required as a cofactor.

It localises to the membrane. It participates in secondary metabolite biosynthesis. Cytochrome P450 monooxygenase that is able to use testosterone as a substrate for oxidation. The chain is Cytochrome P450 monooxygenase 103 from Postia placenta (strain ATCC 44394 / Madison 698-R) (Brown rot fungus).